Here is a 274-residue protein sequence, read N- to C-terminus: Acyl-[acyl-carrier-protein]--UDP-N-acetylglucosamine O-acyltransferase (274 aa).

The protein belongs to the transferase hexapeptide repeat family. LpxA subfamily. As to quaternary structure, homotrimer.

It is found in the cytoplasm. The catalysed reaction is a (3R)-hydroxyacyl-[ACP] + UDP-N-acetyl-alpha-D-glucosamine = a UDP-3-O-[(3R)-3-hydroxyacyl]-N-acetyl-alpha-D-glucosamine + holo-[ACP]. The protein operates within glycolipid biosynthesis; lipid IV(A) biosynthesis; lipid IV(A) from (3R)-3-hydroxytetradecanoyl-[acyl-carrier-protein] and UDP-N-acetyl-alpha-D-glucosamine: step 1/6. Functionally, involved in the biosynthesis of lipid A, a phosphorylated glycolipid that anchors the lipopolysaccharide to the outer membrane of the cell. The sequence is that of Acyl-[acyl-carrier-protein]--UDP-N-acetylglucosamine O-acyltransferase from Bartonella quintana (strain Toulouse) (Rochalimaea quintana).